Here is an 883-residue protein sequence, read N- to C-terminus: Phosphoenolpyruvate carboxylase (883 aa).

Residues His-138 and Lys-546 contribute to the active site.

Belongs to the PEPCase type 1 family. In terms of assembly, homotetramer. The cofactor is Mg(2+).

The catalysed reaction is oxaloacetate + phosphate = phosphoenolpyruvate + hydrogencarbonate. The enzyme has distinct binding sites for each of the allosteric effectors such as acetyl-CoA, fructose 1,6-bisphosphate, guanosine 3'-diphosphate 5'-diphosphate, long chain fatty acids, and L-aspartate. Forms oxaloacetate, a four-carbon dicarboxylic acid source for the tricarboxylic acid cycle. The polypeptide is Phosphoenolpyruvate carboxylase (ppc) (Salmonella typhi).